The chain runs to 431 residues: MKIVDINERLAISGQPNTDEFINFARRGYRSIINLRPDGEEPNQPGNDAEQAAARRAGLAYNFVPVIGTSITEADIQAFQRAIATTEGSVLVHCKSGTRALMLYALSEVIDGRMKRDEVEALGHAHGFDLGRAVTWLKRQAIQTPRVSGFFDPRTGSIQYVVTDQTTKRCAIIDPVLDFDEKSGATATTNADAILAHVEQQGLTVEWILDTHPHADHFSAAQYLKQRTGAPTAIGTHVTKVQRLWREIYNLPTLSTNGSQWDHLFADGDVFNVGSIKGRVMFSPGHTLASVTYVIGDTAFVHDTIFMPDSGTARADFPGGSARALWSSIQAILSLPDETRLFTGHDYQPSGRHPRWESTVGEQKKANLHLAGVDETTFVALREARDKTLPMPKLILHALQVNVLGGQLPEPEANGRRYLKFPLNALEGAAW.

Residues histidine 212, histidine 214, and histidine 286 each coordinate Zn(2+). Aspartate 309 contacts substrate.

This sequence belongs to the metallo-beta-lactamase superfamily. Requires Zn(2+) as cofactor.

Functionally, could play a role in cell adherence or biofilm development. The chain is Beta-lactamase hydrolase-like protein from Xylella fastidiosa (strain Temecula1 / ATCC 700964).